A 300-amino-acid polypeptide reads, in one-letter code: Diphthine methyl ester synthase (300 aa).

Residues L9, D85, G88, 113 to 114, L164, L222, and H247 contribute to the S-adenosyl-L-methionine site; that span reads SV.

This sequence belongs to the diphthine synthase family.

The protein localises to the cytoplasm. The enzyme catalyses 2-[(3S)-amino-3-carboxypropyl]-L-histidyl-[translation elongation factor 2] + 4 S-adenosyl-L-methionine = diphthine methyl ester-[translation elongation factor 2] + 4 S-adenosyl-L-homocysteine + 3 H(+). It functions in the pathway protein modification; peptidyl-diphthamide biosynthesis. S-adenosyl-L-methionine-dependent methyltransferase that catalyzes four methylations of the modified target histidine residue in translation elongation factor 2 (EF-2), to form an intermediate called diphthine methyl ester. The four successive methylation reactions represent the second step of diphthamide biosynthesis. This is Diphthine methyl ester synthase (DPH5) from Yarrowia lipolytica (strain CLIB 122 / E 150) (Yeast).